We begin with the raw amino-acid sequence, 102 residues long: NADH-quinone oxidoreductase subunit K 2 (102 aa).

The next 3 membrane-spanning stretches (helical) occupy residues 1–21, 30–50, and 65–85; these read MIVP…LGLV, IIMM…AFVG, and LMIM…VVYL.

The protein belongs to the complex I subunit 4L family. As to quaternary structure, NDH-1 is composed of 14 different subunits. Subunits NuoA, H, J, K, L, M, N constitute the membrane sector of the complex.

The protein resides in the cell inner membrane. The enzyme catalyses a quinone + NADH + 5 H(+)(in) = a quinol + NAD(+) + 4 H(+)(out). Functionally, NDH-1 shuttles electrons from NADH, via FMN and iron-sulfur (Fe-S) centers, to quinones in the respiratory chain. The immediate electron acceptor for the enzyme in this species is believed to be ubiquinone. Couples the redox reaction to proton translocation (for every two electrons transferred, four hydrogen ions are translocated across the cytoplasmic membrane), and thus conserves the redox energy in a proton gradient. The sequence is that of NADH-quinone oxidoreductase subunit K 2 from Geotalea daltonii (strain DSM 22248 / JCM 15807 / FRC-32) (Geobacter daltonii).